Consider the following 956-residue polypeptide: Pollen-specific leucine-rich repeat extensin-like protein 1 (956 aa).

The N-terminal stretch at 1–30 (MTRRTMEKPFGCFLLLFCFTISIFFYSAAA) is a signal peptide. LRR repeat units lie at residues 39–59 (LTRR…DIEY), 60–84 (EVDL…AWKK), 119–143 (VLVV…LGLL), 144–166 (TDVA…SLSK), 168–191 (TLMY…ALSW), 192–215 (PSLK…IFDK), 217–238 (LDAI…IGKS), 240–261 (ASVV…IGQM), 262–285 (KNLN…IGSL), 287–309 (NVTV…LSGL), and 310–332 (ANVE…NICK). 2 N-linked (GlcNAc...) asparagine glycosylation sites follow: Asn-273 and Asn-287. N-linked (GlcNAc...) asparagine glycosylation is present at Asn-338. Over residues 355–377 (PGSSQEKQFDDTSNCLQNRPNQK) the composition is skewed to polar residues. 2 disordered regions span residues 355–380 (PGSS…KSAK) and 397–956 (CAGG…FPGY). Pro residues predominate over residues 408-417 (SPKPTPTPKA). Basic and acidic residues-rich tracts occupy residues 431 to 441 (EPSKPKPEESP) and 452 to 534 (TPSH…EESP). Pro residues predominate over residues 640-830 (QSPPVHSPPP…KPVTPLPPAT (191 aa)). A contains the Ser-Pro(4) repeats region spans residues 651–956 (PPVHSPPPPV…SPPPPMFPGY (306 aa)). Polar residues predominate over residues 837–852 (PTPSSSESGEISTPVQ). Positions 947–956 (SPPPPMFPGY) are enriched in pro residues.

Post-translationally, hydroxylated on proline residues in the S-P-P-P-P repeat. O-glycosylated on hydroxyprolines. Expressed in flowers, stamen, pollen, and pollinated carpels.

Its subcellular location is the secreted. It localises to the cell wall. Its function is as follows. Modulates cell morphogenesis by regulating cell wall formation and assembly, and/or growth polarization. The protein is Pollen-specific leucine-rich repeat extensin-like protein 1 (PEX1) of Arabidopsis thaliana (Mouse-ear cress).